A 245-amino-acid chain; its full sequence is DNA polymerase sliding clamp (245 aa).

This sequence belongs to the PCNA family. Homotrimer. The subunits circularize to form a toroid; DNA passes through its center. Replication factor C (RFC) is required to load the toroid on the DNA.

Functionally, sliding clamp subunit that acts as a moving platform for DNA processing. Responsible for tethering the catalytic subunit of DNA polymerase and other proteins to DNA during high-speed replication. This Archaeoglobus fulgidus (strain ATCC 49558 / DSM 4304 / JCM 9628 / NBRC 100126 / VC-16) protein is DNA polymerase sliding clamp.